The primary structure comprises 382 residues: Lipid-A-disaccharide synthase (382 aa).

Belongs to the LpxB family.

It carries out the reaction 2-N,3-O-bis[(3R)-3-hydroxytetradecanoyl]-alpha-D-glucosaminyl 1-phosphate + UDP-2-N,3-O-bis[(3R)-3-hydroxytetradecanoyl]-alpha-D-glucosamine = lipid A disaccharide (E. coli) + UDP + H(+). It catalyses the reaction a lipid X + a UDP-2-N,3-O-bis[(3R)-3-hydroxyacyl]-alpha-D-glucosamine = a lipid A disaccharide + UDP + H(+). The protein operates within glycolipid biosynthesis; lipid IV(A) biosynthesis; lipid IV(A) from (3R)-3-hydroxytetradecanoyl-[acyl-carrier-protein] and UDP-N-acetyl-alpha-D-glucosamine: step 5/6. Its function is as follows. Condensation of UDP-2,3-diacylglucosamine and 2,3-diacylglucosamine-1-phosphate to form lipid A disaccharide, a precursor of lipid A, a phosphorylated glycolipid that anchors the lipopolysaccharide to the outer membrane of the cell. The polypeptide is Lipid-A-disaccharide synthase (Citrobacter koseri (strain ATCC BAA-895 / CDC 4225-83 / SGSC4696)).